Consider the following 497-residue polypeptide: uncharacterized protein (497 aa).

The segment at 474-497 (DPRNPFSNGKPSGWSDEDVAWLKR) is disordered. Over residues 488–497 (SDEDVAWLKR) the composition is skewed to acidic residues.

This is an uncharacterized protein from Bacillus anthracis.